The primary structure comprises 313 residues: Porphobilinogen deaminase (313 aa).

Cys-242 is subject to S-(dipyrrolylmethanemethyl)cysteine.

Belongs to the HMBS family. As to quaternary structure, monomer. The cofactor is dipyrromethane.

It catalyses the reaction 4 porphobilinogen + H2O = hydroxymethylbilane + 4 NH4(+). Its pathway is porphyrin-containing compound metabolism; protoporphyrin-IX biosynthesis; coproporphyrinogen-III from 5-aminolevulinate: step 2/4. Its function is as follows. Tetrapolymerization of the monopyrrole PBG into the hydroxymethylbilane pre-uroporphyrinogen in several discrete steps. The sequence is that of Porphobilinogen deaminase from Pseudomonas aeruginosa (strain UCBPP-PA14).